Here is a 506-residue protein sequence, read N- to C-terminus: MQEIKRYLQLDRPQQHDFLYPLIFQEYIYALAHDRGFNRSSLLENPGYDNKSSLLIVKRLITRMYQQNHFWISSNDSNQNPFFGRNKNLYPQILSEGFAFILELPFSLRLILSLERKKKKIVKSQNLRSIHSIFPFLEDNFSHFPFVLDILIPHPIHLEILVQTLRCWVKDASSLHLLRFFLHEYWNWNSLSTPKKASSSFSKRNQRLFFFLYNSHVCEYESIFVFLRNQSSHLRSTSSGALLERIYFYGKIERLVNVFLKDFQINLCLLKDPFMHYVRYQEKSILASKGTPLFMTKWKYYLVPFWQCYFSLWFHPRRIYLNQLSKNFLEFGGYLSSVRLNASVIRSQILENSFLINNAINKFDTFVPIIPLIGSLAKAQFCNVLGYPISKLVRTDLSDSDIIDRFGRICRNLSHYHSGSSKRKSLYRIKYILRLSCARTLARKHKSTVRAFLKRLGSELLEEFLMSEEQVLSLTFPKASSTLRGVYRSRIWFLDIICLHDLVNQK.

It belongs to the intron maturase 2 family. MatK subfamily.

Its subcellular location is the plastid. It is found in the chloroplast. Its function is as follows. Usually encoded in the trnK tRNA gene intron. Probably assists in splicing its own and other chloroplast group II introns. This chain is Maturase K, found in Jasminum nudiflorum (Winter jasmine).